The chain runs to 706 residues: ATP-dependent DNA helicase HMI1, mitochondrial (706 aa).

In terms of domain architecture, UvrD-like helicase ATP-binding spans 5-277 (TPSQWKVINK…LKLFDNFRST (273 aa)). Residues 29 to 34 (GSGKTL) and Arg-275 contribute to the ATP site. The 316-residue stretch at 278–593 (PEIISLASKI…KLSTIHSAKG (316 aa)) folds into the UvrD-like helicase C-terminal domain. Residues 693-706 (YSSLRGCKSVFRRI) constitute a propeptide, cleaved upon import into mitochondrion.

Belongs to the helicase family. UvrD subfamily. Requires Mg(2+) as cofactor.

It localises to the mitochondrion inner membrane. It catalyses the reaction Couples ATP hydrolysis with the unwinding of duplex DNA by translocating in the 3'-5' direction.. It carries out the reaction ATP + H2O = ADP + phosphate + H(+). In terms of biological role, required for mitochondrial genome maintenance and mitochondrial DNA inheritance. The sequence is that of ATP-dependent DNA helicase HMI1, mitochondrial (HMI1) from Saccharomyces cerevisiae (strain ATCC 204508 / S288c) (Baker's yeast).